Consider the following 257-residue polypeptide: Receptor expression-enhancing protein 4 (257 aa).

A run of 2 helical transmembrane segments spans residues Met-1 to Tyr-21 and Trp-42 to Phe-62. A phosphoserine mark is found at Ser-152 and Ser-194. Residues Val-177–Ser-257 are disordered. Phosphothreonine is present on Thr-196. Phosphoserine occurs at positions 202 and 253.

The protein belongs to the DP1 family.

Its subcellular location is the endoplasmic reticulum membrane. In terms of biological role, microtubule-binding protein required to ensure proper cell division and nuclear envelope reassembly by sequestering the endoplasmic reticulum away from chromosomes during mitosis. Probably acts by clearing the endoplasmic reticulum membrane from metaphase chromosomes. This chain is Receptor expression-enhancing protein 4 (Reep4), found in Mus musculus (Mouse).